We begin with the raw amino-acid sequence, 162 residues long: NADH-quinone oxidoreductase subunit I (162 aa).

2 consecutive 4Fe-4S ferredoxin-type domains span residues 52 to 82 (LRRYPNGEERCIACKLCEAICPAQAITIEAG) and 93 to 122 (TRYDIDMVKCIYCGMCQEACPVDAIVEGPN). Residues cysteine 62, cysteine 65, cysteine 68, cysteine 72, cysteine 102, cysteine 105, cysteine 108, and cysteine 112 each coordinate [4Fe-4S] cluster.

The protein belongs to the complex I 23 kDa subunit family. In terms of assembly, NDH-1 is composed of 14 different subunits. Subunits NuoA, H, J, K, L, M, N constitute the membrane sector of the complex. Requires [4Fe-4S] cluster as cofactor.

The protein resides in the cell inner membrane. The enzyme catalyses a quinone + NADH + 5 H(+)(in) = a quinol + NAD(+) + 4 H(+)(out). NDH-1 shuttles electrons from NADH, via FMN and iron-sulfur (Fe-S) centers, to quinones in the respiratory chain. The immediate electron acceptor for the enzyme in this species is believed to be ubiquinone. Couples the redox reaction to proton translocation (for every two electrons transferred, four hydrogen ions are translocated across the cytoplasmic membrane), and thus conserves the redox energy in a proton gradient. The chain is NADH-quinone oxidoreductase subunit I from Methylobacterium nodulans (strain LMG 21967 / CNCM I-2342 / ORS 2060).